The chain runs to 625 residues: Protein LEO1 homolog (625 aa).

Disordered stretches follow at residues 1 to 214 (MVKG…DMVL) and 415 to 625 (EREK…SDED). Acidic residues-rich tracts occupy residues 40 to 55 (DEAEGGVEPEGEGEAE) and 63 to 80 (EAESDGEQGDVELDPGES). Basic and acidic residues-rich tracts occupy residues 97–113 (SEARDSDSDNKEEEHGG), 121–137 (QEVVESGSERSGEKHYE), and 182–197 (EYVRNDVEQDEHRSPI). Serine 203 bears the Phosphoserine mark. Basic and acidic residues predominate over residues 415-425 (EREKEKREKAE). Positions 415-539 (EREKEKREKA…ETEEEEEEKS (125 aa)) form a coiled coil. Residues 426–436 (SQNLKASTKLS) show a composition bias toward polar residues. Residues 471–491 (YRSNRGYEEDLEAEAQRERRI) are compositionally biased toward basic and acidic residues. Positions 492 to 501 (LNAKKSHKGI) are enriched in basic residues. Over residues 523 to 537 (EREESEYETEEEEEE) the composition is skewed to acidic residues. The span at 538–547 (KSPARGRGKD) shows a compositional bias: basic and acidic residues. Residues serine 548, serine 570, serine 600, serine 605, and serine 622 each carry the phosphoserine modification. The span at 548–561 (SEDEYEEDAEEDEE) shows a compositional bias: acidic residues.

The protein belongs to the LEO1 family. As to quaternary structure, component of the nuclear PAF1 complex (PAF1C), which consists of VIP2/ELF7/PAF1, VIP3/SKI8/WDR61, VIP4/LEO1, VIP5/RTF1, VIP6/ELF8/CTR9 and CDC73. Interacts with VIP3 and VIP6. In terms of tissue distribution, expressed in roots, shoot apices, stems, cauline leaves, inflorescence apices and flowers.

The protein localises to the nucleus. Its function is as follows. Component of the PAF1 complex (PAF1C) which is involved in histone modifications such as methylation on histone H3 'Lys-4' (H3K4me3). Involved in regulation of flowering time. Required for the expression of the flowering repressor and MADS box gene FLC. Involved in the control of seed dormancy and germination. The chain is Protein LEO1 homolog from Arabidopsis thaliana (Mouse-ear cress).